The chain runs to 231 residues: Protein N-terminal glutamine amidohydrolase (231 aa).

Positions 1–21 are disordered; sequence MADDRVAGGATPPPPPPPPPL. The span at 11 to 21 shows a compositional bias: pro residues; sequence TPPPPPPPPPL. Catalysis depends on residues C33, H89, and D108.

The protein belongs to the NTAQ1 family. Monomer.

The enzyme catalyses N-terminal L-glutaminyl-[protein] + H2O = N-terminal L-glutamyl-[protein] + NH4(+). Its function is as follows. Mediates the side-chain deamidation of N-terminal glutamine residues to glutamate, an important step in N-end rule pathway of protein degradation. Conversion of the resulting N-terminal glutamine to glutamate renders the protein susceptible to arginylation, polyubiquitination and degradation as specified by the N-end rule. Does not act on substrates with internal or C-terminal glutamine and does not act on non-glutamine residues in any position. The sequence is that of Protein N-terminal glutamine amidohydrolase from Oryza sativa subsp. indica (Rice).